A 224-amino-acid polypeptide reads, in one-letter code: Deoxyribose-phosphate aldolase (224 aa).

The Proton donor/acceptor role is filled by aspartate 92. Lysine 155 serves as the catalytic Schiff-base intermediate with acetaldehyde. Lysine 184 (proton donor/acceptor) is an active-site residue.

Belongs to the DeoC/FbaB aldolase family. DeoC type 1 subfamily.

Its subcellular location is the cytoplasm. The enzyme catalyses 2-deoxy-D-ribose 5-phosphate = D-glyceraldehyde 3-phosphate + acetaldehyde. It functions in the pathway carbohydrate degradation; 2-deoxy-D-ribose 1-phosphate degradation; D-glyceraldehyde 3-phosphate and acetaldehyde from 2-deoxy-alpha-D-ribose 1-phosphate: step 2/2. In terms of biological role, catalyzes a reversible aldol reaction between acetaldehyde and D-glyceraldehyde 3-phosphate to generate 2-deoxy-D-ribose 5-phosphate. The chain is Deoxyribose-phosphate aldolase from Clostridium perfringens (strain ATCC 13124 / DSM 756 / JCM 1290 / NCIMB 6125 / NCTC 8237 / Type A).